We begin with the raw amino-acid sequence, 86 residues long: MNTKEPHKRLVQGKVISKFAEKSAVILVERKVVHEKYRKIVKKFKKYTIHDENNQVKVGDFVSAIECRPLSKTKSFTLKEILVVGV.

The protein belongs to the universal ribosomal protein uS17 family. Part of the 30S ribosomal subunit.

In terms of biological role, one of the primary rRNA binding proteins, it binds specifically to the 5'-end of 16S ribosomal RNA. The polypeptide is Small ribosomal subunit protein uS17 (Helicobacter pylori (strain P12)).